The chain runs to 88 residues: Small ribosomal subunit protein bS18 (88 aa).

Residues 1–11 (MTTANTTAKDN) show a composition bias toward low complexity. The interval 1-21 (MTTANTTAKDNAATKKRGRKA) is disordered.

This sequence belongs to the bacterial ribosomal protein bS18 family. Part of the 30S ribosomal subunit. Forms a tight heterodimer with protein bS6.

Binds as a heterodimer with protein bS6 to the central domain of the 16S rRNA, where it helps stabilize the platform of the 30S subunit. The polypeptide is Small ribosomal subunit protein bS18 (Thermoanaerobacter pseudethanolicus (strain ATCC 33223 / 39E) (Clostridium thermohydrosulfuricum)).